The following is a 72-amino-acid chain: Bowman-Birk type proteinase inhibitor (72 aa).

Disulfide bonds link C8-C61, C9-C24, C12-C57, C14-C22, C31-C38, C35-C50, and C40-C48.

It belongs to the Bowman-Birk serine protease inhibitor family.

In terms of biological role, this inhibitor has two domains, each with separate antiprotease activity. 1 mole of inhibitor inhibits either 1 mole of trypsin or 2 moles of chymotrypsin, stoichiometrically. In Vicia sativa subsp. nigra (Common vetch), this protein is Bowman-Birk type proteinase inhibitor.